The primary structure comprises 564 residues: Arginine--tRNA ligase (564 aa).

The 'HIGH' region motif lies at 136 to 146 (ANPTGPLHMGN).

This sequence belongs to the class-I aminoacyl-tRNA synthetase family. Monomer.

The protein localises to the cytoplasm. The catalysed reaction is tRNA(Arg) + L-arginine + ATP = L-arginyl-tRNA(Arg) + AMP + diphosphate. This Acetivibrio thermocellus (strain ATCC 27405 / DSM 1237 / JCM 9322 / NBRC 103400 / NCIMB 10682 / NRRL B-4536 / VPI 7372) (Clostridium thermocellum) protein is Arginine--tRNA ligase.